Here is a 285-residue protein sequence, read N- to C-terminus: MVNLREIKGRINSTKSTKQITKAMQMVSSSKLRRAEQNAKAYVPYMEKIQDVVGAIASGTKDSGHPMLTARPVKKTAYLVIGSDRGLAGAYNSSILRQVQRTIDERHKSKDEYVILAIGRVVRDYFVKRDHNVISDVVGLPDQPTFADIKEIARNAVGMFIDGTYDQLYMYYNHFVSAIANEVTEKKLLPLTDLAPPSSNASYEFEPSGEAILEVLLPQYAESLVYGALLDGKASEHASRMTAMKNATDNASDLISDLSLQYNRARQAAITQEITEIVGGAAALE.

The protein belongs to the ATPase gamma chain family. In terms of assembly, F-type ATPases have 2 components, CF(1) - the catalytic core - and CF(0) - the membrane proton channel. CF(1) has five subunits: alpha(3), beta(3), gamma(1), delta(1), epsilon(1). CF(0) has three main subunits: a, b and c.

It localises to the cell membrane. Its function is as follows. Produces ATP from ADP in the presence of a proton gradient across the membrane. The gamma chain is believed to be important in regulating ATPase activity and the flow of protons through the CF(0) complex. This chain is ATP synthase gamma chain, found in Lysinibacillus sphaericus (strain C3-41).